The sequence spans 307 residues: Ribonuclease HIII (307 aa).

The RNase H type-2 domain occupies 93 to 307 (MSVIGSDEVG…ANTQKAKKWL (215 aa)). A divalent metal cation-binding residues include aspartate 99, glutamate 100, and aspartate 204.

It belongs to the RNase HII family. RnhC subfamily. It depends on Mn(2+) as a cofactor. Mg(2+) serves as cofactor.

Its subcellular location is the cytoplasm. It catalyses the reaction Endonucleolytic cleavage to 5'-phosphomonoester.. In terms of biological role, endonuclease that specifically degrades the RNA of RNA-DNA hybrids. This is Ribonuclease HIII from Bacillus pumilus (strain SAFR-032).